The sequence spans 340 residues: Anthranilate phosphoribosyltransferase (340 aa).

Residues G81, 84–85 (GD), T89, 91–94 (NIST), 109–117 (KHGNRGATS), and S121 each bind 5-phospho-alpha-D-ribose 1-diphosphate. G81 is an anthranilate binding site. S93 contacts Mg(2+). An anthranilate-binding site is contributed by N112. R167 lines the anthranilate pocket. The Mg(2+) site is built by D225 and E226.

It belongs to the anthranilate phosphoribosyltransferase family. As to quaternary structure, homodimer. It depends on Mg(2+) as a cofactor.

The enzyme catalyses N-(5-phospho-beta-D-ribosyl)anthranilate + diphosphate = 5-phospho-alpha-D-ribose 1-diphosphate + anthranilate. The protein operates within amino-acid biosynthesis; L-tryptophan biosynthesis; L-tryptophan from chorismate: step 2/5. Catalyzes the transfer of the phosphoribosyl group of 5-phosphorylribose-1-pyrophosphate (PRPP) to anthranilate to yield N-(5'-phosphoribosyl)-anthranilate (PRA). The chain is Anthranilate phosphoribosyltransferase from Methanocorpusculum labreanum (strain ATCC 43576 / DSM 4855 / Z).